A 204-amino-acid chain; its full sequence is MGAYKYIEELWKKKQSDVMRFLQRVRCWEFRQLPGIVRVTRPSRPDKARRLGYKAKQGYVVYRVRVRRGGRKRPVPKGIVYGKPKNQGITQLKFQRSLRSVAEERAGRKLGGLRVLNSYWINQDSTYKYYEIILVDQAHSAIRKDPRINWICNAVHKHRELRGLTSAGKKYRGLRGRGHLYHKARPSKRATWKRNNTLSLRRYR.

The protein belongs to the eukaryotic ribosomal protein eL15 family.

The sequence is that of Large ribosomal subunit protein eL15z (SB61) from Picea mariana (Black spruce).